The chain runs to 260 residues: uncharacterized protein (260 aa).

This is an uncharacterized protein from Saccharomyces cerevisiae (strain ATCC 204508 / S288c) (Baker's yeast).